A 126-amino-acid chain; its full sequence is Small ribosomal subunit protein uS11 (126 aa).

This sequence belongs to the universal ribosomal protein uS11 family. As to quaternary structure, part of the 30S ribosomal subunit. Interacts with proteins S7 and S18. Binds to IF-3.

In terms of biological role, located on the platform of the 30S subunit, it bridges several disparate RNA helices of the 16S rRNA. Forms part of the Shine-Dalgarno cleft in the 70S ribosome. In Treponema pallidum (strain Nichols), this protein is Small ribosomal subunit protein uS11.